A 305-amino-acid chain; its full sequence is MAQVKRVRRDVSGIILLDKPRGFTSNAALQKVRWLLNAEKAGHTGSLDPLATGVLPLCFGEATKFSQYLLDADKAYETVMQLGVTTTTADAEGEVLERKPVAVTREQLEALLPQFRGDILQVPPMYSALKRDGQPLYKLARAGEVVEREPRSVNIARLELLALEGDKARLAVACSKGTYIRTLVEDLGQQLGCGAHVAELRRTQAGPFDLSQTVTLETLERLHGEGGAEALDALLQPVDSGLEHWPLLQLSEHSAYYWLHGQPVRAPEAPKYGMVRVQDNNGRFIGIGEVSEDGRIAPRRLIRSE.

Asp-48 (nucleophile) is an active-site residue.

Belongs to the pseudouridine synthase TruB family. Type 1 subfamily.

It carries out the reaction uridine(55) in tRNA = pseudouridine(55) in tRNA. Its function is as follows. Responsible for synthesis of pseudouridine from uracil-55 in the psi GC loop of transfer RNAs. This chain is tRNA pseudouridine synthase B, found in Stutzerimonas stutzeri (strain A1501) (Pseudomonas stutzeri).